Here is a 657-residue protein sequence, read N- to C-terminus: Glycogen debranching enzyme (657 aa).

The active-site Nucleophile is Asp336. Glu371 acts as the Proton donor in catalysis. The interval 460–479 (ANGEENRDGTNNNYSNNHGK) is disordered.

The protein belongs to the glycosyl hydrolase 13 family.

It catalyses the reaction Hydrolysis of (1-&gt;6)-alpha-D-glucosidic linkages to branches with degrees of polymerization of three or four glucose residues in limit dextrin.. It functions in the pathway glycan degradation; glycogen degradation. In terms of biological role, removes maltotriose and maltotetraose chains that are attached by 1,6-alpha-linkage to the limit dextrin main chain, generating a debranched limit dextrin. The polypeptide is Glycogen debranching enzyme (Escherichia coli O81 (strain ED1a)).